We begin with the raw amino-acid sequence, 364 residues long: Apyrase (364 aa).

The first 35 residues, Met1–Ser35, serve as a signal peptide directing secretion.

This sequence belongs to the apyrase family. It depends on Ca(2+) as a cofactor. In terms of tissue distribution, salivary gland (at protein level).

It is found in the secreted. It carries out the reaction a ribonucleoside 5'-triphosphate + 2 H2O = a ribonucleoside 5'-phosphate + 2 phosphate + 2 H(+). Functionally, facilitates hematophagy by inhibiting ADP-dependent platelet aggregation in the host. Cleaves adenosine triphosphate (ATP) and adenosine diphosphate (ADP) to adenosine monophosphate (AMP) and inorganic phosphate in calcium-dependent manner. In Cimex lectularius (Bed bug), this protein is Apyrase.